The following is a 202-amino-acid chain: IMP cyclohydrolase (202 aa).

This sequence belongs to the archaeal IMP cyclohydrolase family.

It carries out the reaction IMP + H2O = 5-formamido-1-(5-phospho-D-ribosyl)imidazole-4-carboxamide. It participates in purine metabolism; IMP biosynthesis via de novo pathway; IMP from 5-formamido-1-(5-phospho-D-ribosyl)imidazole-4-carboxamide: step 1/1. In terms of biological role, catalyzes the cyclization of 5-formylamidoimidazole-4-carboxamide ribonucleotide to IMP. In Methanosphaera stadtmanae (strain ATCC 43021 / DSM 3091 / JCM 11832 / MCB-3), this protein is IMP cyclohydrolase.